The primary structure comprises 330 residues: 5'-AMP-activated protein kinase subunit gamma-1 (330 aa).

The disordered stretch occupies residues 1–21 (MESVAAESSPALENEHFQETP). 3 consecutive CBS domains span residues 42–102 (PTSS…KSAL), 124–186 (SFKP…PKPE), and 197–259 (IGTY…NLDV). ADP contacts are provided by residues R69, 84-89 (MLTITD), V129, 150-151 (HR), and K169. AMP is bound by residues R69, 84–89 (MLTITD), V129, H150, 150–151 (HR), K169, T199, A204, 225–226 (SA), and 241–244 (SKFD). ATP-binding positions include R69, 84–89 (MLTITD), V129, 150–151 (HR), R151, and K169. An AMPK pseudosubstrate motif is present at residues 137 to 158 (LFDAVSSLIRNKIHRLPVIDPE). 241–244 (SKFD) lines the ADP pocket. ATP is bound at residue 241-244 (SKFD). Position 260 is a phosphoserine; by ULK1 (S260). T262 carries the post-translational modification Phosphothreonine; by ULK1. R268 is a binding site for ADP. An AMP-binding site is contributed by R268. Residue R268 participates in ATP binding. S269 bears the Phosphoserine; by ULK1 mark. Positions 271–328 (YFEGVLKCYLHETLETIINRLVEAEVHRLVVVDEHDVVKGIVSLSDILQALVLTGGEK) constitute a CBS 4 domain. ADP contacts are provided by residues L276 and 297–298 (HR). AMP contacts are provided by residues L276, H297, 297–298 (HR), and 313–316 (SLSD). Residues L276 and 297–298 (HR) contribute to the ATP site.

Belongs to the 5'-AMP-activated protein kinase gamma subunit family. As to quaternary structure, AMPK is a heterotrimer of an alpha catalytic subunit (PRKAA1 or PRKAA2), a beta (PRKAB1 or PRKAB2) and a gamma non-catalytic subunits (PRKAG1, PRKAG2 or PRKAG3). Interacts with FNIP1 and FNIP2. Post-translationally, phosphorylated by ULK1 and ULK2; leading to negatively regulate AMPK activity and suggesting the existence of a regulatory feedback loop between ULK1, ULK2 and AMPK. Glycosylated; O-GlcNAcylated by OGT, promoting the AMP-activated protein kinase (AMPK) activity.

AMP/ATP-binding subunit of AMP-activated protein kinase (AMPK), an energy sensor protein kinase that plays a key role in regulating cellular energy metabolism. In response to reduction of intracellular ATP levels, AMPK activates energy-producing pathways and inhibits energy-consuming processes: inhibits protein, carbohydrate and lipid biosynthesis, as well as cell growth and proliferation. AMPK acts via direct phosphorylation of metabolic enzymes, and by longer-term effects via phosphorylation of transcription regulators. Also acts as a regulator of cellular polarity by remodeling the actin cytoskeleton; probably by indirectly activating myosin. Gamma non-catalytic subunit mediates binding to AMP, ADP and ATP, leading to activate or inhibit AMPK: AMP-binding results in allosteric activation of alpha catalytic subunit (PRKAA1 or PRKAA2) both by inducing phosphorylation and preventing dephosphorylation of catalytic subunits. ADP also stimulates phosphorylation, without stimulating already phosphorylated catalytic subunit. ATP promotes dephosphorylation of catalytic subunit, rendering the AMPK enzyme inactive. In Mus musculus (Mouse), this protein is 5'-AMP-activated protein kinase subunit gamma-1 (Prkag1).